Here is a 480-residue protein sequence, read N- to C-terminus: REST corepressor 1 (480 aa).

Residues 1 to 105 (MPAMVEKGPE…GGGMRVGPQY (105 aa)) are disordered. Low complexity-rich tracts occupy residues 21-58 (AASA…AAAA) and 66-89 (SLAA…SGSS). The interval 72–251 (PNGNSGSNSW…RHARKQKRER (180 aa)) is interaction with HDAC1. Residues 97–183 (GGMRVGPQYQ…KSLADLPNFT (87 aa)) form the ELM2 domain. K116 participates in a covalent cross-link: Glycyl lysine isopeptide (Lys-Gly) (interchain with G-Cter in SUMO2). S121 carries the phosphoserine modification. In terms of domain architecture, SANT 1 spans 184–235 (PFPDEWTVEDKVLFEQAFSFHGKTFHRIQQMLPDKSIASLVKFYYSWKKTRT). A coiled-coil region spans residues 238 to 265 (SVMDRHARKQKREREESEDELEETNGSN). Positions 238 to 308 (SVMDRHARKQ…AKNRAKRKPP (71 aa)) are disordered. S254 is modified (phosphoserine). Basic and acidic residues predominate over residues 272–282 (DPNKESKKEVP). The interval 290 to 378 (VKKEKHSTQA…LPEVIQKCNA (89 aa)) is interaction with KDM1A. A Glycyl lysine isopeptide (Lys-Gly) (interchain with G-Cter in SUMO2) cross-link involves residue K291. Residues 328-363 (ATTVLRQLDMELVSIKRQIQNIKQTNSALKEKLDGG) adopt a coiled-coil conformation. The 52-residue stretch at 375–426 (KCNARWTTEEQLLAVQAIRKYGRDFQAISDVIGNKSVVQVKNFFVNYRRRFN) folds into the SANT 2 domain. Residues 436–466 (AEHGKDETNGPANQKPVKSPESSIKIPEEED) form a disordered region. Residue S454 is modified to Phosphoserine. K460 participates in a covalent cross-link: Glycyl lysine isopeptide (Lys-Gly) (interchain with G-Cter in SUMO2).

It belongs to the CoREST family. As to quaternary structure, component of a BHC histone deacetylase complex that contains HDAC1, HDAC2, HMG20B/BRAF35, KDM1A, RCOR1/CoREST and PHF21A/BHC80. The BHC complex may also contain ZMYM2, ZNF217, ZMYM3, GSE1 and GTF2I. Interacts with REST. Interacts with the SMARCE1/BAF57, suggesting that the BHC complex may recruit the ATP-dependent chromatin-remodeling SWI-SNF complex. Interacts directly with GFI1 and GFI1B in a RCOR/GFI/KDM1A/HDAC complex. Interacts with INMS1. Interacts with SOX2. Expressed in the external germinal layer (EGL) and internal granular layer (IGL) of the cerebellum and in Purkinje cells (at protein level).

Its subcellular location is the nucleus. In terms of biological role, essential component of the BHC complex, a corepressor complex that represses transcription of neuron-specific genes in non-neuronal cells. The BHC complex is recruited at RE1/NRSE sites by REST and acts by deacetylating and demethylating specific sites on histones, thereby acting as a chromatin modifier. In the BHC complex, it serves as a molecular beacon for the recruitment of molecular machinery, including MeCP2 and SUV39H1, that imposes silencing across a chromosomal interval. Plays a central role in demethylation of Lys-4 of histone H3 by promoting demethylase activity of KDM1A on core histones and nucleosomal substrates. It also protects KDM1A from the proteasome. Component of a RCOR/GFI/KDM1A/HDAC complex that suppresses, via histone deacetylase (HDAC) recruitment, a number of genes implicated in multilineage blood cell development and controls hematopoietic differentiation. This is REST corepressor 1 (Rcor1) from Mus musculus (Mouse).